Reading from the N-terminus, the 735-residue chain is 2-5A-dependent ribonuclease (735 aa).

The disordered stretch occupies residues 1–21 (METPDYNTPQGGTPSAGSQRT). 9 ANK repeats span residues 24–53 (EDDSSLIKAVQKGDVVRVQQLLEKGADANA), 58–87 (WGWTPLHNAVQAGRVDIVNLLLSHGADPHR), 91–120 (NGATPFIIAGIQGDVKLLEILLSCGADVNE), 124–153 (NGFTAFMEAAERGNAEALRFLFAKGANVNL), 167–197 (GGATALMSAAEKGHLEVLRILLNDMKAEVDA), 201–234 (MGRNALIRTLLNWDCENVEEITSILIQHGADVNV), 238–268 (RGKTPLIAAVERKHTGLVQMLLSREGINIDA), 272–301 (EGKTALLIAVDKQLKEIVQLLLEKGADKCD), and 303–328 (LVWIARRNHDYHLVKLLLPYVANPDT). A binding to TMEV Leader protein region spans residues 26–51 (DSSLIKAVQKGDVVRVQQLLEKGADA). 2 2-5A binding (P-loop) regions span residues 229 to 242 (GADVNVRGERGKTP) and 253 to 275 (GLVQMLLSREGINIDARDNEGKT). Residues 364–584 (IHDDYKIAGT…LVDLLGHPFF (221 aa)) form the Protein kinase domain. Residues 401–436 (CKEVSCLRDCGDHSNLVAFYGREDDKGCLYVCVSLC) form a C6-type zinc finger. Residues 587 to 722 (WENRYRTLRN…KHFPQPPPRL (136 aa)) enclose the KEN domain. The segment at 714-735 (HFPQPPPRLSVPEAVGPGGIQS) is disordered.

The protein belongs to the protein kinase superfamily. In terms of assembly, (Microbial infection) Interacts (via N-terminus) with TMEV leader protein; this interaction prevents RNASEL activation by its substrate 2'-5' oligoadenylates. Monomer (inactive form) or homodimer. Interacts with ABCE1; this interaction inhibits the RNASEL. It depends on Mn(2+) as a cofactor. Mg(2+) is required as a cofactor. In terms of tissue distribution, expressed in spleen, thymus, lung, testis, kidney, liver and heart.

It is found in the cytoplasm. The protein resides in the mitochondrion. With respect to regulation, after binding to 2-5A (5'-phosphorylated 2',5'-linked oligoadenylates) the homodimerization and subsequent activation occurs. Inhibited by RNASEL inhibitor ABCE1/RLI, a cytoplasmic member of the ATP-binding cassette (ABC) transporter family. Endoribonuclease that functions in the interferon (IFN) antiviral response. In INF treated and virus infected cells, RNASEL probably mediates its antiviral effects through a combination of direct cleavage of single-stranded viral RNAs, inhibition of protein synthesis through the degradation of rRNA, induction of apoptosis, and induction of other antiviral genes. RNASEL mediated apoptosis is the result of a JNK-dependent stress-response pathway leading to cytochrome c release from mitochondria and caspase-dependent apoptosis. Therefore, activation of RNASEL could lead to elimination of virus infected cells under some circumstances. In the crosstalk between autophagy and apoptosis proposed to induce autophagy as an early stress response to small double-stranded RNA and at later stages of prolonged stress to activate caspase-dependent proteolytic cleavage of BECN1 to terminate autophagy and promote apoptosis. Might play a central role in the regulation of mRNA turnover. Cleaves 3' of UpNp dimers, with preference for UU and UA sequences, to sets of discrete products ranging from between 4 and 22 nucleotides in length. This chain is 2-5A-dependent ribonuclease (Rnasel), found in Mus musculus (Mouse).